Consider the following 445-residue polypeptide: N-succinylarginine dihydrolase (445 aa).

Residues A19–S28, N110, and H137–R138 contribute to the substrate site. The active site involves E174. Position 214 (R214) interacts with substrate. Residue H250 is part of the active site. Substrate-binding residues include D252 and N363. C369 serves as the catalytic Nucleophile.

The protein belongs to the succinylarginine dihydrolase family. As to quaternary structure, homodimer.

It catalyses the reaction N(2)-succinyl-L-arginine + 2 H2O + 2 H(+) = N(2)-succinyl-L-ornithine + 2 NH4(+) + CO2. It participates in amino-acid degradation; L-arginine degradation via AST pathway; L-glutamate and succinate from L-arginine: step 2/5. Functionally, catalyzes the hydrolysis of N(2)-succinylarginine into N(2)-succinylornithine, ammonia and CO(2). This is N-succinylarginine dihydrolase from Shewanella sediminis (strain HAW-EB3).